We begin with the raw amino-acid sequence, 542 residues long: Chaperonin GroEL (542 aa).

ATP is bound by residues 29 to 32 (TLGP), 86 to 90 (DGTTT), Gly413, and Asp493.

This sequence belongs to the chaperonin (HSP60) family. In terms of assembly, forms a cylinder of 14 subunits composed of two heptameric rings stacked back-to-back. Interacts with the co-chaperonin GroES.

Its subcellular location is the cytoplasm. The enzyme catalyses ATP + H2O + a folded polypeptide = ADP + phosphate + an unfolded polypeptide.. Functionally, together with its co-chaperonin GroES, plays an essential role in assisting protein folding. The GroEL-GroES system forms a nano-cage that allows encapsulation of the non-native substrate proteins and provides a physical environment optimized to promote and accelerate protein folding. The sequence is that of Chaperonin GroEL from Elusimicrobium minutum (strain Pei191).